Consider the following 347-residue polypeptide: Probable dual-specificity RNA methyltransferase RlmN (347 aa).

Residue E93 is the Proton acceptor of the active site. The Radical SAM core domain maps to T99–D333. A disulfide bridge links C106 with C338. [4Fe-4S] cluster-binding residues include C113, C117, and C120. S-adenosyl-L-methionine-binding positions include G160 to E161, S190, S219 to H221, and N295. C338 (S-methylcysteine intermediate) is an active-site residue.

The protein belongs to the radical SAM superfamily. RlmN family. It depends on [4Fe-4S] cluster as a cofactor.

It localises to the cytoplasm. It carries out the reaction adenosine(2503) in 23S rRNA + 2 reduced [2Fe-2S]-[ferredoxin] + 2 S-adenosyl-L-methionine = 2-methyladenosine(2503) in 23S rRNA + 5'-deoxyadenosine + L-methionine + 2 oxidized [2Fe-2S]-[ferredoxin] + S-adenosyl-L-homocysteine. The enzyme catalyses adenosine(37) in tRNA + 2 reduced [2Fe-2S]-[ferredoxin] + 2 S-adenosyl-L-methionine = 2-methyladenosine(37) in tRNA + 5'-deoxyadenosine + L-methionine + 2 oxidized [2Fe-2S]-[ferredoxin] + S-adenosyl-L-homocysteine. In terms of biological role, specifically methylates position 2 of adenine 2503 in 23S rRNA and position 2 of adenine 37 in tRNAs. This Prochlorococcus marinus (strain MIT 9301) protein is Probable dual-specificity RNA methyltransferase RlmN.